The sequence spans 214 residues: GTP-binding nuclear protein GSP1 (214 aa).

The 169-residue stretch at 4–172 (RELTYKICLI…LHLARIFTGR (169 aa)) folds into the Small GTPase Ran-type domain. 17 to 22 (GVGKTT) is a binding site for GTP. The segment at 34–42 (KNYNATVGA) is switch-I. GTP is bound by residues Gly66, 121-124 (NKID), and 151-153 (SAK). The tract at residues 66–82 (GQEKKAVLKDVYYIGAS) is switch-II.

Belongs to the small GTPase superfamily. Ran family. As to quaternary structure, found in a nuclear export complex with RanGTP, exportin and pre-miRNA.

The protein resides in the nucleus. Its function is as follows. GTP-binding protein involved in nucleocytoplasmic transport. Required for the import of protein into the nucleus and also for RNA export. The chain is GTP-binding nuclear protein GSP1 (GSP1) from Encephalitozoon cuniculi (strain GB-M1) (Microsporidian parasite).